The sequence spans 493 residues: Alpha-amylase-related protein (493 aa).

The first 19 residues, 1-19 (MFKFALTLTLCLAGSLSLA), serve as a signal peptide directing secretion. Gln20 carries the pyrrolidone carboxylic acid modification. The cysteines at positions 47 and 103 are disulfide-linked. The Ca(2+) site is built by Asn117, Gln168, and Asp177. A disulfide bridge connects residues Cys156 and Cys170. Chloride is bound at residue Arg205. Asp207 (nucleophile) is an active-site residue. His211 is a binding site for Ca(2+). The active-site Proton donor is Glu244. Chloride contacts are provided by Asn307 and Arg342. 3 disulfides stabilise this stretch: Cys375–Cys381, Cys417–Cys440, and Cys447–Cys459.

Belongs to the glycosyl hydrolase 13 family. In terms of assembly, monomer. It depends on Ca(2+) as a cofactor. Chloride serves as cofactor.

It localises to the secreted. The enzyme catalyses Endohydrolysis of (1-&gt;4)-alpha-D-glucosidic linkages in polysaccharides containing three or more (1-&gt;4)-alpha-linked D-glucose units.. The polypeptide is Alpha-amylase-related protein (Amyrel) (Drosophila simulans (Fruit fly)).